The sequence spans 323 residues: tRNA dimethylallyltransferase (323 aa).

12 to 19 serves as a coordination point for ATP; it reads GPTAAGKT. A substrate-binding site is contributed by 14–19; that stretch reads TAAGKT. Interaction with substrate tRNA regions lie at residues 37–40 and 161–165; these read DSAL and QRLIR.

It belongs to the IPP transferase family. In terms of assembly, monomer. Requires Mg(2+) as cofactor.

The enzyme catalyses adenosine(37) in tRNA + dimethylallyl diphosphate = N(6)-dimethylallyladenosine(37) in tRNA + diphosphate. Its function is as follows. Catalyzes the transfer of a dimethylallyl group onto the adenine at position 37 in tRNAs that read codons beginning with uridine, leading to the formation of N6-(dimethylallyl)adenosine (i(6)A). This Pseudomonas savastanoi pv. phaseolicola (strain 1448A / Race 6) (Pseudomonas syringae pv. phaseolicola (strain 1448A / Race 6)) protein is tRNA dimethylallyltransferase.